We begin with the raw amino-acid sequence, 64 residues long: uncharacterized protein (64 aa).

The next 2 membrane-spanning stretches (helical) occupy residues 4–24 and 35–55; these read IYQY…WLAY and MYLN…TFGM.

Its subcellular location is the cell membrane. This is an uncharacterized protein from Bacillus subtilis (strain 168).